The following is a 339-amino-acid chain: UDP-N-acetylglucosamine--N-acetylmuramyl-(pentapeptide) pyrophosphoryl-undecaprenol N-acetylglucosamine transferase (339 aa).

UDP-N-acetyl-alpha-D-glucosamine contacts are provided by residues 10 to 12 (TGG), N124, R168, S188, I235, and Q280.

This sequence belongs to the glycosyltransferase 28 family. MurG subfamily.

Its subcellular location is the cell inner membrane. It carries out the reaction di-trans,octa-cis-undecaprenyl diphospho-N-acetyl-alpha-D-muramoyl-L-alanyl-D-glutamyl-meso-2,6-diaminopimeloyl-D-alanyl-D-alanine + UDP-N-acetyl-alpha-D-glucosamine = di-trans,octa-cis-undecaprenyl diphospho-[N-acetyl-alpha-D-glucosaminyl-(1-&gt;4)]-N-acetyl-alpha-D-muramoyl-L-alanyl-D-glutamyl-meso-2,6-diaminopimeloyl-D-alanyl-D-alanine + UDP + H(+). Its pathway is cell wall biogenesis; peptidoglycan biosynthesis. Cell wall formation. Catalyzes the transfer of a GlcNAc subunit on undecaprenyl-pyrophosphoryl-MurNAc-pentapeptide (lipid intermediate I) to form undecaprenyl-pyrophosphoryl-MurNAc-(pentapeptide)GlcNAc (lipid intermediate II). This Pseudothermotoga lettingae (strain ATCC BAA-301 / DSM 14385 / NBRC 107922 / TMO) (Thermotoga lettingae) protein is UDP-N-acetylglucosamine--N-acetylmuramyl-(pentapeptide) pyrophosphoryl-undecaprenol N-acetylglucosamine transferase.